We begin with the raw amino-acid sequence, 150 residues long: Copper transporter 3 (150 aa).

Helical transmembrane passes span 50 to 70 and 100 to 120; these read GGMY…LEFL and LAYL…LAAV.

It belongs to the copper transporter (Ctr) (TC 1.A.56) family. SLC31A subfamily.

It is found in the membrane. Involved in the transport of copper. This Oryza sativa subsp. japonica (Rice) protein is Copper transporter 3 (COPT3).